The primary structure comprises 301 residues: GTPase Era (301 aa).

Residues 6–173 (KSGFVAIVGR…LEQTNANLEI (168 aa)) enclose the Era-type G domain. The tract at residues 14-21 (GRPNVGKS) is G1. GTP is bound at residue 14-21 (GRPNVGKS). The interval 40–44 (QTTRN) is G2. A G3 region spans residues 61 to 64 (DTPG). Residues 61 to 65 (DTPGI) and 123 to 126 (NKID) each bind GTP. A G4 region spans residues 123 to 126 (NKID). The tract at residues 152–154 (ISA) is G5. The 79-residue stretch at 204–282 (TREEVPHSVA…FLEIWVKVQK (79 aa)) folds into the KH type-2 domain.

The protein belongs to the TRAFAC class TrmE-Era-EngA-EngB-Septin-like GTPase superfamily. Era GTPase family. Monomer.

It is found in the cytoplasm. The protein localises to the cell membrane. An essential GTPase that binds both GDP and GTP, with rapid nucleotide exchange. Plays a role in 16S rRNA processing and 30S ribosomal subunit biogenesis and possibly also in cell cycle regulation and energy metabolism. The polypeptide is GTPase Era (Listeria monocytogenes serotype 4b (strain F2365)).